We begin with the raw amino-acid sequence, 47 residues long: Large ribosomal subunit protein bL34 (47 aa).

Belongs to the bacterial ribosomal protein bL34 family.

This is Large ribosomal subunit protein bL34 from Mycobacterium ulcerans (strain Agy99).